Reading from the N-terminus, the 513-residue chain is MEGRGFSGLYKNSSEELFLKTVMESPIGMPVPTMEMLGFKTVSQSFRADSEELFKRWLTNEEGYNSTSMGLNSRLSKRISTELVNVSNQQHVGVASEGRNNDKSCLQNSFLTNDVSGDFNFPIREPVDRELQSGNLFLAKAWFLTDQRMTRSRSSELRRRYTEMQNTQAPQGLDSMFMAPKHDANIIKEELAHFNGFDYLSMCEIPSQKGSFMSPSNSSSSTFNTQQLVDVDKVSSCVSMLKGTLQRKRLECQVEKDAAEDGLNEIFGIREPLFQSGFNEGQENWNHQKLVNVQGDFTDQVKDTGVIETLEGAANFVLEGFANQTSQIHGGTASGEPSQSESSAAAPVISSGLDACEGPSNSSQTLCDSSWKQVGESTQNRAKGVREQIMDNLKDDRKRKRLERYGSVTSAVSDDKVDTTKKRRVERSRKMAEAKERNLTPTIPSDMQAVMKRCENLEKEVRSLKLNLSFMNRKDSEQTKQIEDLQKQNEELADEKERLLEEIERLLSETGKI.

The segment at 327–435 (QIHGGTASGE…ERSRKMAEAK (109 aa)) is disordered. Residues 334-347 (SGEPSQSESSAAAP) show a composition bias toward low complexity. Polar residues predominate over residues 359 to 381 (PSNSSQTLCDSSWKQVGESTQNR). Residues 384–396 (GVREQIMDNLKDD) show a composition bias toward basic and acidic residues. Short sequence motifs (nuclear localization signal) lie at residues 397–401 (RKRKR) and 421–424 (KKRR). Residues 447–513 (MQAVMKRCEN…ERLLSETGKI (67 aa)) adopt a coiled-coil conformation.

It belongs to the CYCLOPS family.

Its subcellular location is the nucleus. Involved symbiotic signaling. Required for root infection by symbiotic rhizobia, infection thread (IT) formation, and nodule development. Required for symbiosome formation (i.e. the release of the bacteria from the ITs) and subsequent symbiosome development. Involved in arbuscular mycorrhizal (AM) symbiosis. This Pisum sativum (Garden pea) protein is Protein CYCLOPS.